Reading from the N-terminus, the 383-residue chain is Pleckstrin homology domain-containing family A member 1 (383 aa).

PH domains lie at 7 to 112 (QNRI…KAIK) and 191 to 289 (AVIK…GAIV). Val284 is modified (phosphoserine). Residues 362-383 (LPRSSQGTSRSRLSLQESQLPK) form a disordered region. Residues 370–383 (SRSRLSLQESQLPK) show a composition bias toward low complexity.

In terms of assembly, interacts with MPDZ and PTPN13.

It is found in the cytoplasm. The protein localises to the cell membrane. The protein resides in the nucleus. In terms of biological role, binds specifically to phosphatidylinositol 3,4-diphosphate (PtdIns3,4P2), but not to other phosphoinositides. May recruit other proteins to the plasma membrane. The chain is Pleckstrin homology domain-containing family A member 1 (Plekha1) from Mus musculus (Mouse).